The following is a 470-amino-acid chain: MSLLVVGLNHRTAPTSLLEQASVSGDDTPKVLHDLAAAAHVNEAVVLSTCNRTEIYADVETFHGGVADISDQLSRISGIDLGDLAGHLYVHHDARAVGHLFSVVCGLDSMLVGESQILGQVRGAFRTGQSAGVAGSALSGLFQAALRVGKRAHSETSIDAAGASIVAVGIRLAASSLGILSEVPAVPVAPPGGVAGELGGAAVLAAPVAEPPPLAGARVLLIGAGAVGSLAAQTARRAGATEIVIANRTPARAARVAEMHDGRAVGLTDLPHEILMADLVISSTGATGLVVDHDLVAAALPGRGGRPLVFLDLALPHDIDPGVRALPGVSLIDLEALRVALDGAQVAHDVEAVRALVSTEVAGFLDRRRAGRVAPTVVALRAHADSVVHGELARLHSRLPDLDDREWELVEGAVRRVVDKLLHAPTVRVQQLAGAPGGDSYAEALRELFDLPREVPAVVSAPDLDLVERS.

Residues 49–52 (TCNR), serine 109, 114–116 (ESQ), and glutamine 120 each bind substrate. Catalysis depends on cysteine 50, which acts as the Nucleophile. 223–228 (GAGAVG) contacts NADP(+).

This sequence belongs to the glutamyl-tRNA reductase family. In terms of assembly, homodimer.

The enzyme catalyses (S)-4-amino-5-oxopentanoate + tRNA(Glu) + NADP(+) = L-glutamyl-tRNA(Glu) + NADPH + H(+). Its pathway is porphyrin-containing compound metabolism; protoporphyrin-IX biosynthesis; 5-aminolevulinate from L-glutamyl-tRNA(Glu): step 1/2. In terms of biological role, catalyzes the NADPH-dependent reduction of glutamyl-tRNA(Glu) to glutamate 1-semialdehyde (GSA). This chain is Glutamyl-tRNA reductase, found in Frankia alni (strain DSM 45986 / CECT 9034 / ACN14a).